A 109-amino-acid chain; its full sequence is Hainantoxin-XVIII-2 (109 aa).

An N-terminal signal peptide occupies residues 1–18 (MKLSIIIIATSLVIAVVA). The propeptide occupies 19-46 (FPSKDSKAIENDKTEQRMEIVVQETARA). Intrachain disulfides connect Cys47/Cys62, Cys59/Cys108, and Cys61/Cys81.

It belongs to the neurotoxin 25 family. F7 subfamily. As to expression, expressed by the venom gland.

The protein resides in the secreted. Its function is as follows. Putative ion channel inhibitor. The chain is Hainantoxin-XVIII-2 from Cyriopagopus hainanus (Chinese bird spider).